A 312-amino-acid polypeptide reads, in one-letter code: Glyoxylate/hydroxypyruvate reductase A (312 aa).

Residue arginine 227 is part of the active site. Histidine 275 acts as the Proton donor in catalysis.

It belongs to the D-isomer specific 2-hydroxyacid dehydrogenase family. GhrA subfamily.

The protein localises to the cytoplasm. The catalysed reaction is glycolate + NADP(+) = glyoxylate + NADPH + H(+). It catalyses the reaction (R)-glycerate + NAD(+) = 3-hydroxypyruvate + NADH + H(+). It carries out the reaction (R)-glycerate + NADP(+) = 3-hydroxypyruvate + NADPH + H(+). Its function is as follows. Catalyzes the NADPH-dependent reduction of glyoxylate and hydroxypyruvate into glycolate and glycerate, respectively. This chain is Glyoxylate/hydroxypyruvate reductase A, found in Escherichia coli (strain 55989 / EAEC).